Here is a 520-residue protein sequence, read N- to C-terminus: Glucose-1-phosphate adenylyltransferase small subunit, chloroplastic (520 aa).

The N-terminal 71 residues, 1–71 (MATMAAIGSL…RTPSIVSPKA (71 aa)), are a transit peptide targeting the chloroplast. Residues 1-81 (MATMAAIGSL…VSDSQNSQTC (81 aa)) form a disordered region. Low complexity predominate over residues 14 to 27 (SSSSNHTRRLSSSS). A compositionally biased stretch (polar residues) spans 28–51 (QRKTLSFSSSSLTGEKLNPTQEII).

It belongs to the bacterial/plant glucose-1-phosphate adenylyltransferase family. In terms of assembly, heterotetramer. As to expression, leaves.

Its subcellular location is the plastid. It is found in the chloroplast. It catalyses the reaction alpha-D-glucose 1-phosphate + ATP + H(+) = ADP-alpha-D-glucose + diphosphate. The protein operates within glycan biosynthesis; starch biosynthesis. Activated by 3'phosphoglycerate, inhibited by orthophosphate. Allosteric regulation. Functionally, this protein plays a role in synthesis of starch. It catalyzes the synthesis of the activated glycosyl donor, ADP-glucose from Glc-1-P and ATP. The chain is Glucose-1-phosphate adenylyltransferase small subunit, chloroplastic (AGPS1) from Brassica napus (Rape).